The sequence spans 418 residues: Queuine tRNA-ribosyltransferase accessory subunit 2 (418 aa).

Residues C325, C327, C330, and H356 each contribute to the Zn(2+) site.

Belongs to the queuine tRNA-ribosyltransferase family. QTRT2 subfamily. As to quaternary structure, heterodimer of a catalytic subunit and an accessory subunit. The cofactor is Zn(2+).

The protein resides in the cytoplasm. Non-catalytic subunit of the queuine tRNA-ribosyltransferase (TGT) that catalyzes the base-exchange of a guanine (G) residue with queuine (Q) at position 34 (anticodon wobble position) in tRNAs with GU(N) anticodons (tRNA-Asp, -Asn, -His and -Tyr), resulting in the hypermodified nucleoside queuosine (7-(((4,5-cis-dihydroxy-2-cyclopenten-1-yl)amino)methyl)-7-deazaguanosine). The protein is Queuine tRNA-ribosyltransferase accessory subunit 2 of Drosophila sechellia (Fruit fly).